A 524-amino-acid polypeptide reads, in one-letter code: Translation initiation factor eIF2B subunit delta (524 aa).

The interval 1-173 is disordered; the sequence is MATAAVAVRE…ERQQVPTRKD (173 aa). Residue alanine 2 is modified to N-acetylalanine. Serine 12 is subject to Phosphoserine. Over residues 26 to 40 the composition is skewed to basic and acidic residues; sequence AEGREMTQEEKLQLR. Over residues 41–51 the composition is skewed to basic residues; it reads KEKKQQKKKRK. A Phosphothreonine modification is found at threonine 86. Basic and acidic residues-rich tracts occupy residues 87–121 and 161–173; these read AKEK…RKGD and KKPE…TRKD. Residues 171 to 180 form a may bind the chemical integrated stress response (ISR) inhibitor ISRIB region; the sequence is RKDYGSKVSL.

Belongs to the eIF-2B alpha/beta/delta subunits family. Component of the translation initiation factor 2B (eIF2B) complex which is a heterodecamer of two sets of five different subunits: alpha, beta, gamma, delta and epsilon. Subunits alpha, beta and delta comprise a regulatory subcomplex and subunits epsilon and gamma comprise a catalytic subcomplex. Within the complex, the hexameric regulatory complex resides at the center, with the two heterodimeric catalytic subcomplexes bound on opposite sides.

The protein resides in the cytoplasm. It is found in the cytosol. With respect to regulation, activated by the chemical integrated stress response (ISR) inhibitor ISRIB which stimulates guanine nucleotide exchange factor activity for both phosphorylated and unphosphorylated eIF2. Functionally, acts as a component of the translation initiation factor 2B (eIF2B) complex, which catalyzes the exchange of GDP for GTP on eukaryotic initiation factor 2 (eIF2) gamma subunit. Its guanine nucleotide exchange factor activity is repressed when bound to eIF2 complex phosphorylated on the alpha subunit, thereby limiting the amount of methionyl-initiator methionine tRNA available to the ribosome and consequently global translation is repressed. In Bos taurus (Bovine), this protein is Translation initiation factor eIF2B subunit delta (EIF2B4).